A 313-amino-acid polypeptide reads, in one-letter code: Protein-methionine-sulfoxide reductase catalytic subunit MsrP (313 aa).

Residues 1 to 45 (MPAYRPPHIASSEITPKSFYLSRRNFLGTAAGLAAIGLAGREAIA) constitute a signal peptide (tat-type signal). Residues N71, 74–75 (YE), C128, T163, N213, R218, and 229–231 (GIK) each bind Mo-molybdopterin.

The protein belongs to the MsrP family. Heterodimer of a catalytic subunit (MsrP) and a heme-binding subunit (MsrQ). Mo-molybdopterin serves as cofactor. In terms of processing, predicted to be exported by the Tat system. The position of the signal peptide cleavage has not been experimentally proven.

The protein resides in the periplasm. The enzyme catalyses L-methionyl-[protein] + a quinone + H2O = L-methionyl-(S)-S-oxide-[protein] + a quinol. The catalysed reaction is L-methionyl-[protein] + a quinone + H2O = L-methionyl-(R)-S-oxide-[protein] + a quinol. Part of the MsrPQ system that repairs oxidized periplasmic proteins containing methionine sulfoxide residues (Met-O), using respiratory chain electrons. Thus protects these proteins from oxidative-stress damage caused by reactive species of oxygen and chlorine generated by the host defense mechanisms. MsrPQ is essential for the maintenance of envelope integrity under bleach stress, rescuing a wide series of structurally unrelated periplasmic proteins from methionine oxidation. The catalytic subunit MsrP is non-stereospecific, being able to reduce both (R-) and (S-) diastereoisomers of methionine sulfoxide. In Agrobacterium fabrum (strain C58 / ATCC 33970) (Agrobacterium tumefaciens (strain C58)), this protein is Protein-methionine-sulfoxide reductase catalytic subunit MsrP.